The chain runs to 262 residues: MSNSPTNMPMRDLLQAGAHFGHQTRFWNPKMNQYIFGARNKIHIINLEHTVKAFNEALTYVNGLAAKNNKVLFVGTKRAASGVIREQALRAGQPYVDHRWLGGMLTNWKTLRQSINRLKELEKQAEDGTFAKLTKREALERTRAMEKLERSLGGIKNMGGLPDAIFVVDVDHEAIAIKEAKNLGIPVIGIVDTNSNPDNVDYIIPANDDAIRAVTLYVTRMADAIIAGKEYAKTQAGGAAEAPAAEDVQTEEAAAPEADSAE.

The segment at 236 to 262 (AGGAAEAPAAEDVQTEEAAAPEADSAE) is disordered.

It belongs to the universal ribosomal protein uS2 family.

The chain is Small ribosomal subunit protein uS2 from Psychrobacter sp. (strain PRwf-1).